The primary structure comprises 140 residues: Small ribosomal subunit protein uS19 (140 aa).

Belongs to the universal ribosomal protein uS19 family.

Functionally, protein S19 forms a complex with S13 that binds strongly to the 16S ribosomal RNA. The polypeptide is Small ribosomal subunit protein uS19 (Sulfolobus acidocaldarius (strain ATCC 33909 / DSM 639 / JCM 8929 / NBRC 15157 / NCIMB 11770)).